A 180-amino-acid polypeptide reads, in one-letter code: Large ribosomal subunit protein uL6c (180 aa).

It belongs to the universal ribosomal protein uL6 family. As to quaternary structure, part of the 50S ribosomal subunit.

The protein localises to the plastid. It is found in the chloroplast. Binds 23S rRNA. This is Large ribosomal subunit protein uL6c (rpl6) from Porphyra purpurea (Red seaweed).